A 356-amino-acid polypeptide reads, in one-letter code: Methionine import ATP-binding protein MetN (356 aa).

Positions 7-250 (IKLDNIDVTF…PRESLTQDFI (244 aa)) constitute an ABC transporter domain. 43–50 (GYSGAGKS) contributes to the ATP binding site.

The protein belongs to the ABC transporter superfamily. Methionine importer (TC 3.A.1.24) family. In terms of assembly, the complex is composed of two ATP-binding proteins (MetN), two transmembrane proteins (MetI) and a solute-binding protein (MetQ).

Its subcellular location is the cell membrane. It catalyses the reaction L-methionine(out) + ATP + H2O = L-methionine(in) + ADP + phosphate + H(+). The enzyme catalyses D-methionine(out) + ATP + H2O = D-methionine(in) + ADP + phosphate + H(+). Its function is as follows. Part of the ABC transporter complex MetNIQ involved in methionine import. Responsible for energy coupling to the transport system. This chain is Methionine import ATP-binding protein MetN, found in Streptococcus agalactiae serotype Ia (strain ATCC 27591 / A909 / CDC SS700).